A 33-amino-acid chain; its full sequence is uncharacterized protein (33 aa).

Positions 1-24 (MRTGTRCDLGELSHPRKTLPPRGM) are disordered.

This is an uncharacterized protein from Treponema pallidum (strain Nichols).